Reading from the N-terminus, the 198-residue chain is Superoxide dismutase [Fe] (198 aa).

Fe cation is bound by residues H27, H74, D157, and H161.

This sequence belongs to the iron/manganese superoxide dismutase family. As to quaternary structure, homodimer. Fe cation serves as cofactor.

The catalysed reaction is 2 superoxide + 2 H(+) = H2O2 + O2. Functionally, destroys superoxide anion radicals which are normally produced within the cells and which are toxic to biological systems. The protein is Superoxide dismutase [Fe] (sodB) of Pseudomonas putida (strain ATCC 47054 / DSM 6125 / CFBP 8728 / NCIMB 11950 / KT2440).